The sequence spans 812 residues: Phospholipase D alpha 2 (812 aa).

Positions 1-36 are excised as a propeptide; the sequence is MAQHLLHGTLHATIYEVDALHTGGLRSAGFLGKIIS. In terms of domain architecture, C2 spans 1–127; the sequence is MAQHLLHGTL…INGEEVEKWV (127 aa). The PLD phosphodiesterase 1 domain maps to 328–368; that stretch reads AMFTHHQKIVVVDSEVPSQGGGSEMRRIMSFVGGIDLCDGR. Catalysis depends on residues H333, K335, and D340. H333 lines the a 1,2-diacyl-sn-glycero-3-phosphate pocket. H374 contributes to the Ca(2+) binding site. 2 residues coordinate a 1,2-diacyl-sn-glycero-3-phosphate: Q524 and H663. The PLD phosphodiesterase 2 domain maps to 658–685; the sequence is FMIYVHSKMMIVDDEYIIVGSANINQRS. Active-site residues include H663, K665, and D670. E724 serves as a coordination point for Ca(2+).

This sequence belongs to the phospholipase D family. C2-PLD subfamily. It depends on Ca(2+) as a cofactor.

The protein localises to the cytoplasm. Its subcellular location is the membrane. The enzyme catalyses a 1,2-diacyl-sn-glycero-3-phosphocholine + H2O = a 1,2-diacyl-sn-glycero-3-phosphate + choline + H(+). Hydrolyzes glycerol-phospholipids at the terminal phosphodiesteric bond. Plays an important role in various cellular processes, including phytohormone action, vesicular trafficking, secretion, cytoskeletal arrangement, meiosis, tumor promotion, pathogenesis, membrane deterioration and senescence. The chain is Phospholipase D alpha 2 (PLD2) from Brassica oleracea var. capitata (Cabbage).